The chain runs to 387 residues: 8-amino-7-oxononanoate synthase (387 aa).

Arg-19 serves as a coordination point for substrate. 106–107 contributes to the pyridoxal 5'-phosphate binding site; it reads GY. A substrate-binding site is contributed by His-131. Pyridoxal 5'-phosphate contacts are provided by Ser-177, His-205, and Thr-236. Lys-239 carries the post-translational modification N6-(pyridoxal phosphate)lysine. Thr-353 provides a ligand contact to substrate.

This sequence belongs to the class-II pyridoxal-phosphate-dependent aminotransferase family. BioF subfamily. Homodimer. The cofactor is pyridoxal 5'-phosphate.

It carries out the reaction 6-carboxyhexanoyl-[ACP] + L-alanine + H(+) = (8S)-8-amino-7-oxononanoate + holo-[ACP] + CO2. Its pathway is cofactor biosynthesis; biotin biosynthesis. Functionally, catalyzes the decarboxylative condensation of pimeloyl-[acyl-carrier protein] and L-alanine to produce 8-amino-7-oxononanoate (AON), [acyl-carrier protein], and carbon dioxide. This chain is 8-amino-7-oxononanoate synthase, found in Nitrosomonas europaea (strain ATCC 19718 / CIP 103999 / KCTC 2705 / NBRC 14298).